Reading from the N-terminus, the 516-residue chain is Cysteine--tRNA ligase (516 aa).

A Zn(2+)-binding site is contributed by Cys34. A 'HIGH' region motif is present at residues 36–46 (PTVYNFAHLGN). 3 residues coordinate Zn(2+): Cys225, His250, and Glu254. The short motif at 285-289 (KMSKS) is the 'KMSKS' region element. Lys288 is a binding site for ATP.

It belongs to the class-I aminoacyl-tRNA synthetase family. In terms of assembly, monomer. Zn(2+) is required as a cofactor.

Its subcellular location is the cytoplasm. The catalysed reaction is tRNA(Cys) + L-cysteine + ATP = L-cysteinyl-tRNA(Cys) + AMP + diphosphate. In Zymomonas mobilis subsp. mobilis (strain ATCC 31821 / ZM4 / CP4), this protein is Cysteine--tRNA ligase.